The sequence spans 132 residues: NADPH-dependent 7-cyano-7-deazaguanine reductase (132 aa).

C43 serves as the catalytic Thioimide intermediate. D50 serves as the catalytic Proton donor. Substrate is bound by residues 65-67 and 84-85; these read VEL and HE.

This sequence belongs to the GTP cyclohydrolase I family. QueF type 1 subfamily.

The protein localises to the cytoplasm. It carries out the reaction 7-aminomethyl-7-carbaguanine + 2 NADP(+) = 7-cyano-7-deazaguanine + 2 NADPH + 3 H(+). It functions in the pathway tRNA modification; tRNA-queuosine biosynthesis. Functionally, catalyzes the NADPH-dependent reduction of 7-cyano-7-deazaguanine (preQ0) to 7-aminomethyl-7-deazaguanine (preQ1). This Thermosynechococcus vestitus (strain NIES-2133 / IAM M-273 / BP-1) protein is NADPH-dependent 7-cyano-7-deazaguanine reductase.